We begin with the raw amino-acid sequence, 96 residues long: Probable quinol oxidase subunit 4 (96 aa).

A run of 3 helical transmembrane segments spans residues 8 to 28 (TVGF…TLYT), 36 to 56 (ITII…MFMH), and 68 to 88 (FKVL…YWVM).

This sequence belongs to the cytochrome c oxidase bacterial subunit 4 family.

Its subcellular location is the cell membrane. It carries out the reaction 2 a quinol + O2 = 2 a quinone + 2 H2O. Its function is as follows. Catalyzes quinol oxidation with the concomitant reduction of oxygen to water. The polypeptide is Probable quinol oxidase subunit 4 (qoxD) (Staphylococcus saprophyticus subsp. saprophyticus (strain ATCC 15305 / DSM 20229 / NCIMB 8711 / NCTC 7292 / S-41)).